Here is a 210-residue protein sequence, read N- to C-terminus: Thymidylate kinase (210 aa).

Position 10 to 17 (10 to 17) interacts with ATP; it reads GPEGAGKS.

This sequence belongs to the thymidylate kinase family.

It catalyses the reaction dTMP + ATP = dTDP + ADP. Its function is as follows. Phosphorylation of dTMP to form dTDP in both de novo and salvage pathways of dTTP synthesis. The sequence is that of Thymidylate kinase from Pseudomonas fluorescens (strain Pf0-1).